The primary structure comprises 156 residues: Small ribosomal subunit protein uS7 (156 aa).

Belongs to the universal ribosomal protein uS7 family. In terms of assembly, part of the 30S ribosomal subunit. Contacts proteins S9 and S11.

Its function is as follows. One of the primary rRNA binding proteins, it binds directly to 16S rRNA where it nucleates assembly of the head domain of the 30S subunit. Is located at the subunit interface close to the decoding center, probably blocks exit of the E-site tRNA. This is Small ribosomal subunit protein uS7 from Klebsiella pneumoniae (strain 342).